Consider the following 278-residue polypeptide: Small ribosomal subunit protein uS3 (278 aa).

The KH type-2 domain occupies 39 to 107 (VRDFLKKRLA…PVHVNIEEVR (69 aa)). The disordered stretch occupies residues 217–278 (VENENEARRG…DAAAVEKEVS (62 aa)). A compositionally biased stretch (basic and acidic residues) spans 230-239 (PRNDAGDNRG).

The protein belongs to the universal ribosomal protein uS3 family. Part of the 30S ribosomal subunit. Forms a tight complex with proteins S10 and S14.

Functionally, binds the lower part of the 30S subunit head. Binds mRNA in the 70S ribosome, positioning it for translation. The sequence is that of Small ribosomal subunit protein uS3 from Aromatoleum aromaticum (strain DSM 19018 / LMG 30748 / EbN1) (Azoarcus sp. (strain EbN1)).